A 170-amino-acid polypeptide reads, in one-letter code: Photosystem II extrinsic protein V (170 aa).

The signal sequence occupies residues 1–33; that stretch reads MASVFSSLRRSLKGLLVLIPVLIGLAVTSPAQA. 4 residues coordinate heme c: cysteine 70, cysteine 73, histidine 74, and histidine 125.

Belongs to the cytochrome c family. PsbV subfamily. As to quaternary structure, PSII is composed of 1 copy each of membrane proteins PsbA, PsbB, PsbC, PsbD, PsbE, PsbF, PsbH, PsbI, PsbJ, PsbK, PsbL, PsbM, PsbT, PsbX, PsbY, PsbZ, Psb30/Ycf12, peripheral proteins PsbO, CyanoQ (PsbQ), PsbU, PsbV and a large number of cofactors. It forms dimeric complexes. Heme c serves as cofactor.

It localises to the cellular thylakoid membrane. Its function is as follows. One of the extrinsic, lumenal subunits of photosystem II (PSII). PSII is a light-driven water plastoquinone oxidoreductase, using light energy to abstract electrons from H(2)O, generating a proton gradient subsequently used for ATP formation. The extrinsic proteins stabilize the structure of photosystem II oxygen-evolving complex (OEC), the ion environment of oxygen evolution and protect the OEC against heat-induced inactivation. Low-potential cytochrome c that plays a role in the OEC of PSII. The polypeptide is Photosystem II extrinsic protein V (Synechococcus sp. (strain CC9605)).